We begin with the raw amino-acid sequence, 294 residues long: MSTAPPSAPTLIIVSGLSGSGKSVALKTFEDQDYYCSDNLPINLLPDFVRSLLANHDGSAPRRLAVGIDVRGQSNLSQLGNWRQLATDAGVEVEVLFFEASDEAVLKRYADTRRRHPLSQLGLSLPEAIARERELTAPLRREADAVIDTSTLNVHQLRRRIITEFALDHATRLSLLFESFAYKRGVPAEADFVFDARVLPNPHWDPDLRALSGREPGVRDYLEAQPDVQHYLAQLTDFLDTWLPKLGDGTRSYVTVAFGCTGGKHRSVFLAERMARHAREMGWEDVATYHREQD.

Gly16–Ser23 serves as a coordination point for ATP. Asp69 to Gly72 provides a ligand contact to GTP.

Belongs to the RapZ-like family.

In terms of biological role, displays ATPase and GTPase activities. This chain is Nucleotide-binding protein Smal_0950, found in Stenotrophomonas maltophilia (strain R551-3).